The sequence spans 888 residues: MLRQVLHRGLRTCFSRLGHFIASHPVFFASAPVLISILLGASFSRYQVEESVEHLLAPQHSLAKIERNLVNSLFPVNRSKHRLYSDLQTPGRYGRVIVTSFQKANMLDQHHTDLILKLHAAVTKIQVPRPGFNYTFAHICILNNDKTCIVDDIVHVLEELKNARATNRTNFAITYPITHLKDGRAVYNGHQLGGVTVHSKDRVKSAEAIQLTYYLQSINSLNDMVAERWESSFCDTVRLFQKSNSKVKMYPYTSSSLREDFQKTSRVSERYLVTSLILVVTMAILCCSMQDCVRSKPWLGLLGLVTISLATLTAAGIINLTGGKYNSTFLGVPFVMLGHGLYGTFEMLSSWRKTREDQHVKERTAAVYADSMLSFSLTTAMYLVTFGIGASPFTNIEAARIFCCNSCIAIFFNYLYVLSFYGSSLVFTGYIENNYQHSIFCRKVPKPEALQEKPAWYRFLLTARFSEDTAEGEEANTYESHLLVCFLKRYYCDWITNTYVKPFVVLFYLIYISFALMGYLQVSEGSDLSNIVATATQTIEYTTAQQKYFSNYSPVIGFYIYESIEYWNTSVQEDVLEYTKGFVRISWFESYLNYLRKLNVSTGLPKKNFTDMLRNSFLKAPQFSHFQEDIIFSKKYNDEVDVVASRMFLVAKTMETNREELYDLLETLRRLSVTSKVKFIVFNPSFVYMDRYASSLGAPLHNSCISALFLLFFSAFLVADSLINVWITLTVVSVEFGVIGFMTLWKVELDCISVLCLIYGINYTIDNCAPMLSTFVLGKDFTRTKWVKNALEVHGVAILQSYLCYIVGLIPLAAVPSNLTCTLFRCLFLIAFVTFFHCFAILPVILTFLPPSKKKRKEKKNPENREEIECVEMVDIDSTRVVDQITTV.

A helical membrane pass occupies residues 20-40 (FIASHPVFFASAPVLISILLG). Residues N77, N133, and N167 are each glycosylated (N-linked (GlcNAc...) asparagine). One can recognise an SSD domain in the interval 268–427 (SERYLVTSLI…LSFYGSSLVF (160 aa)). 2 consecutive transmembrane segments (helical) span residues 273 to 293 (VTSLILVVTMAILCCSMQDCV) and 298 to 318 (WLGLLGLVTISLATLTAAGII). 2 N-linked (GlcNAc...) asparagine glycosylation sites follow: N319 and N326. A run of 4 helical transmembrane segments spans residues 328-348 (TFLGVPFVMLGHGLYGTFEML), 373-393 (LSFSLTTAMYLVTFGIGASPF), 407-427 (CIAIFFNYLYVLSFYGSSLVF), and 502-522 (PFVVLFYLIYISFALMGYLQV). Residues N568, N599, and N608 are each glycosylated (N-linked (GlcNAc...) asparagine). A run of 2 helical transmembrane segments spans residues 707–727 (ALFLLFFSAFLVADSLINVWI) and 738–758 (VIGFMTLWKVELDCISVLCLI). The N-linked (GlcNAc...) asparagine glycan is linked to N762. A helical transmembrane segment spans residues 795-815 (GVAILQSYLCYIVGLIPLAAV). N818 is a glycosylation site (N-linked (GlcNAc...) asparagine). A helical membrane pass occupies residues 826-846 (CLFLIAFVTFFHCFAILPVIL).

Belongs to the patched family. In terms of tissue distribution, widely expressed, including in various regions of the brain with highest expression in the gray and white cerebellum, followed by the cerebellar vermis and the pituitary gland.

It localises to the cell membrane. The protein resides in the cell projection. It is found in the dendritic spine. Required for the development and function of the thalamic reticular nucleus (TRN), a part of the thalamus that is critical for thalamocortical transmission, generation of sleep rhythms, sensorimotor processing and attention. Can bind cholesterol in vitro. The polypeptide is Patched domain-containing protein 1 (Homo sapiens (Human)).